The sequence spans 942 residues: Cilia- and flagella-associated protein 69 (942 aa).

Positions 1–16 (MSTAEASATTADAAEA) are enriched in low complexity. Residues 1–25 (MSTAEASATTADAAEAGGRTKTGSP) form a disordered region.

In terms of tissue distribution, expressed in ciliated olfactory sensory neurons (at protein level). Expressed in testis, specifically in sperm (at protein level).

Its subcellular location is the cell projection. The protein resides in the cilium. The protein localises to the flagellum. Its function is as follows. Cilium- and flagellum-associated protein. In the olfactory epithelium, regulates the speed of activation and termination of the odor response and thus contributes to the robustness of olfactory transduction pathways. Required for sperm flagellum assembly and stability. This is Cilia- and flagella-associated protein 69 from Mus musculus (Mouse).